A 364-amino-acid polypeptide reads, in one-letter code: Aminomethyltransferase (364 aa).

This sequence belongs to the GcvT family. The glycine cleavage system is composed of four proteins: P, T, L and H.

It carries out the reaction N(6)-[(R)-S(8)-aminomethyldihydrolipoyl]-L-lysyl-[protein] + (6S)-5,6,7,8-tetrahydrofolate = N(6)-[(R)-dihydrolipoyl]-L-lysyl-[protein] + (6R)-5,10-methylene-5,6,7,8-tetrahydrofolate + NH4(+). Functionally, the glycine cleavage system catalyzes the degradation of glycine. The sequence is that of Aminomethyltransferase from Citrobacter koseri (strain ATCC BAA-895 / CDC 4225-83 / SGSC4696).